The sequence spans 193 residues: MSIMIIGLTGGIASGKSTVSKYLAEKGFKVYDADKIAKDISEKKSVQEEIISTFGNKILDKNGNIDRKKLKEIVFENKEKLEKLNGIIHPKVINFYKELKEKKTDKVIIFDVPLLFESGIDKFCDKILVVISDYEVQLNRIIERDKINRELAEKIIKSQLSNEERIKKADVVIENNSNLEDLFKKVERFCETI.

The DPCK domain occupies 5-193 (IIGLTGGIAS…KKVERFCETI (189 aa)). 13-18 (ASGKST) serves as a coordination point for ATP.

This sequence belongs to the CoaE family.

The protein resides in the cytoplasm. The enzyme catalyses 3'-dephospho-CoA + ATP = ADP + CoA + H(+). It functions in the pathway cofactor biosynthesis; coenzyme A biosynthesis; CoA from (R)-pantothenate: step 5/5. In terms of biological role, catalyzes the phosphorylation of the 3'-hydroxyl group of dephosphocoenzyme A to form coenzyme A. This is Dephospho-CoA kinase from Fusobacterium nucleatum subsp. nucleatum (strain ATCC 25586 / DSM 15643 / BCRC 10681 / CIP 101130 / JCM 8532 / KCTC 2640 / LMG 13131 / VPI 4355).